The sequence spans 105 residues: U2-lycotoxin-Ls1c (105 aa).

A signal peptide spans 1–17 (MIKYVLISALLVVAVYS). The propeptide occupies 18 to 41 (FTIEDSEDALLEEAEDELDTEEER). Cystine bridges form between Cys-51/Cys-67, Cys-58/Cys-97, Cys-60/Cys-83, and Cys-69/Cys-81.

This sequence belongs to the neurotoxin 04 (omega-agtx) family. 01 (type I omega-agtx) subfamily. In terms of tissue distribution, expressed by the venom gland.

It localises to the secreted. Functionally, insecticidal to house crickets. It induces an excitatory slow-onset impact that leads to irreversible spastic paralysis. It also modifies human voltage-gated potassium channel Kv1.5/KCNA5. Most likely, it binds to the voltage-sensing domain of the channel, suggesting it does not block the pore but prevents its opening at physiological membrane potentials. The recombinant peptide binds to the channel in an irreversible manner and slows down the hKv1.5 current activation kinetics. It is not toxic to mice, when intracranially injected (at 0.5 ug/g mouse). The polypeptide is U2-lycotoxin-Ls1c (Lycosa singoriensis (Wolf spider)).